Here is a 468-residue protein sequence, read N- to C-terminus: 6-phosphogluconate dehydrogenase, decarboxylating (468 aa).

Residues 9–14 (GLAVMG), 32–34 (NRS), 73–75 (VQA), and asparagine 101 contribute to the NADP(+) site. Residues asparagine 101 and 127 to 129 (SGG) each bind substrate. Lysine 182 serves as the catalytic Proton acceptor. Residue 185-186 (HN) coordinates substrate. The active-site Proton donor is glutamate 189. Substrate is bound by residues tyrosine 190, lysine 259, arginine 286, arginine 444, and histidine 450.

It belongs to the 6-phosphogluconate dehydrogenase family. As to quaternary structure, homodimer.

The catalysed reaction is 6-phospho-D-gluconate + NADP(+) = D-ribulose 5-phosphate + CO2 + NADPH. The protein operates within carbohydrate degradation; pentose phosphate pathway; D-ribulose 5-phosphate from D-glucose 6-phosphate (oxidative stage): step 3/3. Its function is as follows. Catalyzes the oxidative decarboxylation of 6-phosphogluconate to ribulose 5-phosphate and CO(2), with concomitant reduction of NADP to NADPH. This is 6-phosphogluconate dehydrogenase, decarboxylating (gnd) from Staphylococcus aureus (strain COL).